Here is a 162-residue protein sequence, read N- to C-terminus: Protein cornichon homolog 2 (162 aa).

At 1–10 the chain is on the cytoplasmic side; it reads MAFTFAAFCY. The chain crosses the membrane as a helical span at residues 11–31; it reads MLTLVLCASLIFFIIWHIIAF. Residues 32–72 lie on the Lumenal side of the membrane; it reads DELRTDFKNPIEQGNPSRARERVKNVERICCLLRKLVVPEY. A helical membrane pass occupies residues 73–93; the sequence is CIHGLFCLMFMCAAEWVTLGL. Residues 94–138 are Cytoplasmic-facing; it reads NIPLLFYHLWRYFHRPADGSEVMFDPVSIMNVDILNYCQKEAWCK. A helical transmembrane segment spans residues 139–161; sequence LAFYLLSFFYYLYRVGATVRYVS. Alanine 162 is a topological domain (lumenal).

The protein belongs to the cornichon family.

The protein localises to the membrane. Regulates the trafficking and gating properties of AMPA-selective glutamate receptors (AMPARs). In Xenopus tropicalis (Western clawed frog), this protein is Protein cornichon homolog 2 (cnih2).